Here is a 233-residue protein sequence, read N- to C-terminus: MLLFWMWWALLAVFRAFPGIDIYFSQLFFVGADCDATAAAGNICGGFPYRDVAAFDLLRTVFFRLPYVVAIVMVWKLVECYQQHGATFNAERAQKLKVALGTLLIGPVLLVNVVLKEHWGRPRPIQTDIFGGALHFAEAGSLAGKCVSNCSFVSGEAASAGWLFCLLLFVPKSLRYAVAAPLAAISILTPAMRLSFGAHYLSDVVLGWLSSLVVFAALLALTESQQHQKNSEI.

A topological domain (cytoplasmic) is located at residue Met-1. A helical transmembrane segment spans residues 2–22; sequence LLFWMWWALLAVFRAFPGIDI. Over 23–60 the chain is Extracellular; that stretch reads YFSQLFFVGADCDATAAAGNICGGFPYRDVAAFDLLRT. The chain crosses the membrane as a helical span at residues 61 to 81; it reads VFFRLPYVVAIVMVWKLVECY. At 82 to 94 the chain is on the cytoplasmic side; sequence QQHGATFNAERAQ. A helical transmembrane segment spans residues 95 to 115; the sequence is KLKVALGTLLIGPVLLVNVVL. The Extracellular portion of the chain corresponds to 116 to 149; it reads KEHWGRPRPIQTDIFGGALHFAEAGSLAGKCVSN. Residues 150–170 traverse the membrane as a helical segment; it reads CSFVSGEAASAGWLFCLLLFV. Over 171–176 the chain is Cytoplasmic; the sequence is PKSLRY. A helical membrane pass occupies residues 177-197; the sequence is AVAAPLAAISILTPAMRLSFG. The Extracellular portion of the chain corresponds to 198 to 200; it reads AHY. Residues 201-221 traverse the membrane as a helical segment; the sequence is LSDVVLGWLSSLVVFAALLAL. The Cytoplasmic portion of the chain corresponds to 222–233; that stretch reads TESQQHQKNSEI.

Belongs to the lipid A LpxF 4'-phosphatase family.

The protein localises to the cell inner membrane. It functions in the pathway bacterial outer membrane biogenesis; LPS lipid A biosynthesis. Removes the 4'-phosphate moiety from lipid IV(A) (a tetraacylated precursor of lipid A). In Rhizobium leguminosarum, this protein is Lipid A 4'-phosphatase.